The chain runs to 340 residues: DNA primase large subunit PriL (340 aa).

C229, C301, C310, and C318 together coordinate [4Fe-4S] cluster.

Belongs to the eukaryotic-type primase large subunit family. As to quaternary structure, heterodimer of a small subunit (PriS) and a large subunit (PriL). [4Fe-4S] cluster is required as a cofactor.

Its function is as follows. Regulatory subunit of DNA primase, an RNA polymerase that catalyzes the synthesis of short RNA molecules used as primers for DNA polymerase during DNA replication. Stabilizes and modulates the activity of the small subunit, increasing the rate of DNA synthesis, and conferring RNA synthesis capability. The DNA polymerase activity may enable DNA primase to also catalyze primer extension after primer synthesis. May also play a role in DNA repair. In Thermoplasma acidophilum (strain ATCC 25905 / DSM 1728 / JCM 9062 / NBRC 15155 / AMRC-C165), this protein is DNA primase large subunit PriL.